We begin with the raw amino-acid sequence, 406 residues long: Protein IWS1 homolog 2 (406 aa).

Disordered stretches follow at residues 1 to 28 (MQEL…TGRR) and 41 to 89 (DEVE…SEEV). The span at 10–24 (EWVKELEGENEESKF) shows a compositional bias: basic and acidic residues. The segment covering 41–56 (DEVEEDLDDFTEPADD) has biased composition (acidic residues). The span at 69–78 (KKDESGLEKT) shows a compositional bias: basic and acidic residues. The TFIIS N-terminal domain maps to 201–284 (NLLKNWLEPL…NKWGRIIYNK (84 aa)).

This sequence belongs to the IWS1 family.

Its subcellular location is the nucleus. Functionally, transcription factor involved in RNA polymerase II (RNAPII) transcription regulation. Involved in transcription elongation. May function at post-recruitment and elongation steps of transcription. The polypeptide is Protein IWS1 homolog 2 (Arabidopsis thaliana (Mouse-ear cress)).